A 430-amino-acid chain; its full sequence is MSRNQQLFDRAQQTIPGGVNSPVRAFRSVGGTPRFITRAEGAYMWDADGQRYIDYIGSWGPMIVGHAHPEVVRAVQETAAHSFSFGAPTEAEITMAEEICKLVPSIEQVRLVSSGTEATMSALRLARGFTGRDLIIKFEGCYHGHADSLLVKAGSGLLTFADTTQNAPSSAGVPADVTRHTMVLEYNNVEQLEQAFARHAGEIAAVIVEPVAGNMNLVRASDAFLKAMRELCTRDGAVLILDEVMTGFRVALGGAQAHYGIRPDLTCLGKVIGGGMPAAAFGGRRDIMARLAPLGGVYQAGTLSGNPLAVAAGLATLKLIQAPGFYDRLASQTRKLADGLAEAAKAAGVPFAADAIGGMFGIYFREGVPGSFAEVTRSDTARFNRFFHAMLDHGVYLAPSAFEAGFVSAQHDDAILAATLEAARKAFAAG.

Residue Lys270 is modified to N6-(pyridoxal phosphate)lysine.

The protein belongs to the class-III pyridoxal-phosphate-dependent aminotransferase family. HemL subfamily. Homodimer. Pyridoxal 5'-phosphate is required as a cofactor.

The protein resides in the cytoplasm. The enzyme catalyses (S)-4-amino-5-oxopentanoate = 5-aminolevulinate. It functions in the pathway porphyrin-containing compound metabolism; protoporphyrin-IX biosynthesis; 5-aminolevulinate from L-glutamyl-tRNA(Glu): step 2/2. The protein is Glutamate-1-semialdehyde 2,1-aminomutase of Cupriavidus necator (strain ATCC 17699 / DSM 428 / KCTC 22496 / NCIMB 10442 / H16 / Stanier 337) (Ralstonia eutropha).